A 109-amino-acid chain; its full sequence is Large ribosomal subunit protein P1C (109 aa).

The span at 68 to 83 (ASAPTAAGAGAAAPAE) shows a compositional bias: low complexity. A disordered region spans residues 68 to 109 (ASAPTAAGAGAAAPAEAAEEEKKEEAKEEEESDEDMGFGLFD). Acidic residues predominate over residues 94–103 (KEEEESDEDM). A Phosphoserine modification is found at Ser99.

The protein belongs to the eukaryotic ribosomal protein P1/P2 family. In terms of assembly, component of the large ribosomal subunit (LSU). Mature yeast ribosomes consist of a small (40S) and a large (60S) subunit. The 40S small subunit contains 1 molecule of ribosomal RNA (18S rRNA) and at least 33 different proteins. The large 60S subunit contains 3 rRNA molecules (25S, 5.8S and 5S rRNA) and at least 46 different proteins. The acidic ribosomal P-proteins form the stalk structure of the 60S subunit. They are organized as a pentameric complex in which uL10/P0 interacts with 2 heterodimers of P1 and P2 proteins.

The protein resides in the cytoplasm. Functionally, component of the ribosome, a large ribonucleoprotein complex responsible for the synthesis of proteins in the cell. The small ribosomal subunit (SSU) binds messenger RNAs (mRNAs) and translates the encoded message by selecting cognate aminoacyl-transfer RNA (tRNA) molecules. The large subunit (LSU) contains the ribosomal catalytic site termed the peptidyl transferase center (PTC), which catalyzes the formation of peptide bonds, thereby polymerizing the amino acids delivered by tRNAs into a polypeptide chain. The nascent polypeptides leave the ribosome through a tunnel in the LSU and interact with protein factors that function in enzymatic processing, targeting, and the membrane insertion of nascent chains at the exit of the ribosomal tunnel. This chain is Large ribosomal subunit protein P1C (rpp103), found in Schizosaccharomyces pombe (strain 972 / ATCC 24843) (Fission yeast).